The chain runs to 391 residues: Ribonucleoside-diphosphate reductase small chain (391 aa).

Fe cation is bound by residues aspartate 135, glutamate 166, and histidine 169. The active site involves tyrosine 173. Residues glutamate 229, glutamate 263, and histidine 266 each contribute to the Fe cation site.

Belongs to the ribonucleoside diphosphate reductase small chain family. As to quaternary structure, heterodimer of a large and a small subunit. Fe cation serves as cofactor.

It is found in the nucleus. Its subcellular location is the cytoplasm. It catalyses the reaction a 2'-deoxyribonucleoside 5'-diphosphate + [thioredoxin]-disulfide + H2O = a ribonucleoside 5'-diphosphate + [thioredoxin]-dithiol. In terms of biological role, provides the precursors necessary for DNA synthesis. Catalyzes the biosynthesis of deoxyribonucleotides from the corresponding ribonucleotides. This is Ribonucleoside-diphosphate reductase small chain (suc22) from Schizosaccharomyces pombe (strain 972 / ATCC 24843) (Fission yeast).